Reading from the N-terminus, the 118-residue chain is Ig heavy chain V region X24 (118 aa).

An Ig-like domain is found at E1–T111.

The chain is Ig heavy chain V region X24 from Mus musculus (Mouse).